We begin with the raw amino-acid sequence, 445 residues long: UPF0210 protein SPP_0289 (445 aa).

The protein belongs to the UPF0210 family. As to quaternary structure, homodimer.

The sequence is that of UPF0210 protein SPP_0289 from Streptococcus pneumoniae (strain P1031).